The sequence spans 179 residues: Large ribosomal subunit protein uL5 (179 aa).

It belongs to the universal ribosomal protein uL5 family. As to quaternary structure, part of the 50S ribosomal subunit; part of the 5S rRNA/L5/L18/L25 subcomplex. Contacts the 5S rRNA and the P site tRNA. Forms a bridge to the 30S subunit in the 70S ribosome.

In terms of biological role, this is one of the proteins that bind and probably mediate the attachment of the 5S RNA into the large ribosomal subunit, where it forms part of the central protuberance. In the 70S ribosome it contacts protein S13 of the 30S subunit (bridge B1b), connecting the 2 subunits; this bridge is implicated in subunit movement. Contacts the P site tRNA; the 5S rRNA and some of its associated proteins might help stabilize positioning of ribosome-bound tRNAs. The protein is Large ribosomal subunit protein uL5 of Citrobacter koseri (strain ATCC BAA-895 / CDC 4225-83 / SGSC4696).